Here is an 854-residue protein sequence, read N- to C-terminus: DNA mismatch repair protein MutS (854 aa).

Glycine 608–serine 615 is a binding site for ATP.

The protein belongs to the DNA mismatch repair MutS family.

This protein is involved in the repair of mismatches in DNA. It is possible that it carries out the mismatch recognition step. This protein has a weak ATPase activity. This chain is DNA mismatch repair protein MutS, found in Leuconostoc mesenteroides subsp. mesenteroides (strain ATCC 8293 / DSM 20343 / BCRC 11652 / CCM 1803 / JCM 6124 / NCDO 523 / NBRC 100496 / NCIMB 8023 / NCTC 12954 / NRRL B-1118 / 37Y).